The following is a 337-amino-acid chain: MSKINLLLLCGGGSAEHDISLMSANYFETSLAKSEQFSVLRVELDKFGQYRTAAGDDCELTNSREIRFRDESKTPWPVDYVIPCIHGYPGETGDIQSYFNLIQLPYFGCESEASSNCFNKITAKMWFSALGIPNTPYIFLNQFDDAAIEQTQAALAQWGSIFVKAASQGSSVGCYKVDDSAKVAGVLKDAFGYAPYVIVEKTIKARELEVAVYEYNGEVVATVPGEIICDTNTFYTFDEKYAKNSKARTDVVAQHVSAEISEQIRAYAIKAFKGMKLRHLSRIDFFLTADNEILLNEINTFPGSTPISMFPKMLQNHGHDFTEYLSLVINGQLTAKS.

Residues 124–330 enclose the ATP-grasp domain; sequence KMWFSALGIP…FTEYLSLVIN (207 aa). Position 154 to 209 (154 to 209) interacts with ATP; it reads ALAQWGSIFVKAASQGSSVGCYKVDDSAKVAGVLKDAFGYAPYVIVEKTIKARELE. Residues D284, E297, and N299 each contribute to the Mg(2+) site.

The protein belongs to the D-alanine--D-alanine ligase family. The cofactor is Mg(2+). Mn(2+) serves as cofactor.

Its subcellular location is the cytoplasm. It catalyses the reaction 2 D-alanine + ATP = D-alanyl-D-alanine + ADP + phosphate + H(+). Its pathway is cell wall biogenesis; peptidoglycan biosynthesis. Functionally, cell wall formation. This chain is D-alanine--D-alanine ligase, found in Shewanella baltica (strain OS185).